A 478-amino-acid polypeptide reads, in one-letter code: Elongation factor Tu, chloroplastic (478 aa).

Over residues 1–29 the composition is skewed to low complexity; the sequence is MASISAATATSSTKLVSSNSTNPLLPSST. The segment at 1-31 is disordered; that stretch reads MASISAATATSSTKLVSSNSTNPLLPSSTKP. A chloroplast-targeting transit peptide spans 1 to 69; that stretch reads MASISAATAT…THRHRRFTVR (69 aa). Positions 79-283 constitute a tr-type G domain; it reads KPHVNIGTIG…AVDSYIPIPV (205 aa). The tract at residues 88–95 is G1; the sequence is GHVDHGKT. 88–95 is a GTP binding site; it reads GHVDHGKT. A G2 region spans residues 129–133; that stretch reads GITIN. The interval 150 to 153 is G3; sequence DCPG. Residues 150–154 and 205–208 each bind GTP; these read DCPGH and NKQD. The segment at 205–208 is G4; that stretch reads NKQD. Residues 243 to 245 form a G5 region; the sequence is SAL.

The protein belongs to the TRAFAC class translation factor GTPase superfamily. Classic translation factor GTPase family. EF-Tu/EF-1A subfamily.

It localises to the plastid. Its subcellular location is the chloroplast. Its function is as follows. This protein promotes the GTP-dependent binding of aminoacyl-tRNA to the A-site of ribosomes during protein biosynthesis. The polypeptide is Elongation factor Tu, chloroplastic (TUFA) (Nicotiana tabacum (Common tobacco)).